Consider the following 552-residue polypeptide: DNA ligase (552 aa).

E229 is an ATP binding site. K231 acts as the N6-AMP-lysine intermediate in catalysis. Residues R236 and E283 each contribute to the ATP site. The Mg(2+) site is built by E283 and E377. 2 residues coordinate ATP: K382 and K397.

The protein belongs to the ATP-dependent DNA ligase family. In terms of assembly, interacts with host TOP2A and TOP2B. The cofactor is Mg(2+).

The protein resides in the host cytoplasm. It carries out the reaction ATP + (deoxyribonucleotide)n-3'-hydroxyl + 5'-phospho-(deoxyribonucleotide)m = (deoxyribonucleotide)n+m + AMP + diphosphate.. Its function is as follows. DNA ligase that seals nicks in double-stranded DNA during DNA replication, DNA recombination and DNA repair. Recruits cellular topoisomerase II to sites of viral replication and assembly. Contributes to the repair of the viral genome following UV irradiation. This is DNA ligase (OPG180) from Vaccinia virus (strain Western Reserve) (VACV).